The primary structure comprises 122 residues: Large ribosomal subunit protein uL14 (122 aa).

The protein belongs to the universal ribosomal protein uL14 family. As to quaternary structure, part of the 50S ribosomal subunit. Forms a cluster with proteins L3 and L19. In the 70S ribosome, L14 and L19 interact and together make contacts with the 16S rRNA in bridges B5 and B8.

Binds to 23S rRNA. Forms part of two intersubunit bridges in the 70S ribosome. The sequence is that of Large ribosomal subunit protein uL14 from Azorhizobium caulinodans (strain ATCC 43989 / DSM 5975 / JCM 20966 / LMG 6465 / NBRC 14845 / NCIMB 13405 / ORS 571).